We begin with the raw amino-acid sequence, 322 residues long: Protein prune homolog 2 (322 aa).

Positions 1–110 are disordered; it reads MDIHFEEGVL…SIPEYTAEEE (110 aa). Residues 40-52 are compositionally biased toward polar residues; it reads PNINLSLDQSEGS. The span at 57–80 shows a compositional bias: acidic residues; it reads DNLDSPDEIDINVDELDTPDEADS. Residues 130–291 form the CRAL-TRIO domain; it reads DMKVIEPYRR…SIIKYDEEKS (162 aa).

It localises to the cytoplasm. May play an important role in regulating differentiation, survival and aggressiveness of the tumor cells. This is Protein prune homolog 2 (Prune2) from Rattus norvegicus (Rat).